A 480-amino-acid chain; its full sequence is Alpha,alpha-trehalose-phosphate synthase [UDP-forming] 2 (480 aa).

2 residues coordinate D-glucose 6-phosphate: Tyr97 and Asp151. The UDP site is built by Arg288 and Lys293. Residues Arg288 and Lys293 each coordinate UDP-alpha-D-glucose. Arg326 is a binding site for D-glucose 6-phosphate. 387–395 (DGMNLVSFE) lines the UDP-alpha-D-glucose pocket. 391-395 (LVSFE) is a UDP binding site.

The protein belongs to the glycosyltransferase 20 family.

It catalyses the reaction D-glucose 6-phosphate + UDP-alpha-D-glucose = alpha,alpha-trehalose 6-phosphate + UDP + H(+). It functions in the pathway carbohydrate biosynthesis. Its function is as follows. Synthase catalytic subunit of the trehalose synthase complex that catalyzes the production of trehalose from glucose-6-phosphate and UDP-alpha-D-glucose in a two step process. The chain is Alpha,alpha-trehalose-phosphate synthase [UDP-forming] 2 from Aspergillus niger.